The following is a 172-amino-acid chain: Phosphopantetheine adenylyltransferase (172 aa).

Serine 9 provides a ligand contact to substrate. ATP is bound by residues 9–10 (SF) and histidine 17. Substrate is bound by residues lysine 41, leucine 78, and arginine 92. ATP contacts are provided by residues 93–95 (GLR), glutamate 103, and 128–134 (GRAITST).

The protein belongs to the bacterial CoaD family. Homohexamer. Mg(2+) is required as a cofactor.

It localises to the cytoplasm. It catalyses the reaction (R)-4'-phosphopantetheine + ATP + H(+) = 3'-dephospho-CoA + diphosphate. It functions in the pathway cofactor biosynthesis; coenzyme A biosynthesis; CoA from (R)-pantothenate: step 4/5. In terms of biological role, reversibly transfers an adenylyl group from ATP to 4'-phosphopantetheine, yielding dephospho-CoA (dPCoA) and pyrophosphate. The chain is Phosphopantetheine adenylyltransferase from Bartonella quintana (strain Toulouse) (Rochalimaea quintana).